Reading from the N-terminus, the 294-residue chain is tRNA pseudouridine synthase B (294 aa).

The active-site Nucleophile is the Asp38.

Belongs to the pseudouridine synthase TruB family. Type 1 subfamily.

The enzyme catalyses uridine(55) in tRNA = pseudouridine(55) in tRNA. Functionally, responsible for synthesis of pseudouridine from uracil-55 in the psi GC loop of transfer RNAs. The polypeptide is tRNA pseudouridine synthase B (Clostridium perfringens (strain 13 / Type A)).